Reading from the N-terminus, the 65-residue chain is Potassium channel toxin kappa-KTx 2.7 (65 aa).

Residues 1-26 (MKTSGTVYVFLLLLAFGIFTDISSAC) form the signal peptide. Residues 27–39 (SEQMDDEDSYEVE) constitute a propeptide that is removed on maturation. 2 disulfide bridges follow: cysteine 45/cysteine 63 and cysteine 49/cysteine 59.

It belongs to the short scorpion toxin superfamily. Potassium channel inhibitor kappa-KTx family. Kappa-KTx 2 subfamily. In terms of tissue distribution, expressed by the venom gland.

Its subcellular location is the secreted. In terms of biological role, weakly inhibits the Kv7.1/KCNQ1 channel (10 uM of the toxin inhibits currents by 17.8%). This is Potassium channel toxin kappa-KTx 2.7 from Heterometrus petersii (Asian forest scorpion).